We begin with the raw amino-acid sequence, 303 residues long: Kanosamine kinase (303 aa).

The protein belongs to the ROK (NagC/XylR) family.

The catalysed reaction is kanosamine + ATP = D-kanosamine 6-phosphate + ADP + H(+). It participates in antibiotic biosynthesis; rifamycin B biosynthesis. With respect to regulation, inhibited by Zn(2+), Cu(2+), and Fe(2+). Functionally, involved in the biosynthesis of 3-amino-5-hydroxybenzoate (AHBA), a compound that then serves as the starter unit for the assembly of a polyketide during the biosynthesis of rifamycin B and other ansamycin antibiotics. Catalyzes only the phosphorylation of kanosamine to yield kanosamine 6-phosphate. The polypeptide is Kanosamine kinase (rifN) (Amycolatopsis mediterranei (strain S699) (Nocardia mediterranei)).